Here is a 281-residue protein sequence, read N- to C-terminus: Undecaprenyl-diphosphatase (281 aa).

The next 8 helical transmembrane spans lie at 5 to 25, 48 to 68, 92 to 112, 118 to 138, 154 to 174, 192 to 212, 226 to 246, and 261 to 281; these read LFVLKSIVLGIVEGVTEFLPI, VKMYTYVIQLGAIMAVVLLYW, FWFMIFIACIPGAAVKLLLDA, LMTPVSVAIVLILGGLWMIYA, VTPKQALIIGAFQCLAIIPGM, VVAAEFSFFLAIPVMFGYSLL, AELISLVVGFIVAFIVAVAVI, and FAIYRMIFAVIVLIAGFMGFF.

Belongs to the UppP family.

The protein resides in the cell membrane. The enzyme catalyses di-trans,octa-cis-undecaprenyl diphosphate + H2O = di-trans,octa-cis-undecaprenyl phosphate + phosphate + H(+). Its function is as follows. Catalyzes the dephosphorylation of undecaprenyl diphosphate (UPP). Confers resistance to bacitracin. This is Undecaprenyl-diphosphatase from Ruminiclostridium cellulolyticum (strain ATCC 35319 / DSM 5812 / JCM 6584 / H10) (Clostridium cellulolyticum).